The sequence spans 838 residues: Probable beta-glucosidase K (838 aa).

N-linked (GlcNAc...) asparagine glycosylation is present at N19. D232 is a catalytic residue. N-linked (GlcNAc...) asparagine glycosylation is found at N324 and N489. One can recognise a PA14 domain in the interval 405–564 (EGQPGLRMRF…DPELAIARAV (160 aa)).

The protein belongs to the glycosyl hydrolase 3 family.

It localises to the secreted. It carries out the reaction Hydrolysis of terminal, non-reducing beta-D-glucosyl residues with release of beta-D-glucose.. The protein operates within glycan metabolism; cellulose degradation. Beta-glucosidases are one of a number of cellulolytic enzymes involved in the degradation of cellulosic biomass. Catalyzes the last step releasing glucose from the inhibitory cellobiose. In Emericella nidulans (strain FGSC A4 / ATCC 38163 / CBS 112.46 / NRRL 194 / M139) (Aspergillus nidulans), this protein is Probable beta-glucosidase K (bglK).